The following is a 315-amino-acid chain: Methionyl-tRNA formyltransferase (315 aa).

A (6S)-5,6,7,8-tetrahydrofolate-binding site is contributed by 113–116 (SLLP).

The protein belongs to the Fmt family.

The enzyme catalyses L-methionyl-tRNA(fMet) + (6R)-10-formyltetrahydrofolate = N-formyl-L-methionyl-tRNA(fMet) + (6S)-5,6,7,8-tetrahydrofolate + H(+). Attaches a formyl group to the free amino group of methionyl-tRNA(fMet). The formyl group appears to play a dual role in the initiator identity of N-formylmethionyl-tRNA by promoting its recognition by IF2 and preventing the misappropriation of this tRNA by the elongation apparatus. The sequence is that of Methionyl-tRNA formyltransferase from Shigella sonnei (strain Ss046).